The primary structure comprises 179 residues: Large ribosomal subunit protein uL6 (179 aa).

This sequence belongs to the universal ribosomal protein uL6 family. Part of the 50S ribosomal subunit.

Functionally, this protein binds to the 23S rRNA, and is important in its secondary structure. It is located near the subunit interface in the base of the L7/L12 stalk, and near the tRNA binding site of the peptidyltransferase center. The sequence is that of Large ribosomal subunit protein uL6 from Bacillus velezensis (strain DSM 23117 / BGSC 10A6 / LMG 26770 / FZB42) (Bacillus amyloliquefaciens subsp. plantarum).